We begin with the raw amino-acid sequence, 273 residues long: Chondrolectin (273 aa).

A signal peptide spans 1–21; it reads MIRIASLLLGAALLCAQGAFA. At 22–216 the chain is on the extracellular side; that stretch reads RRVVSGQKVC…VVTEAGIIPN (195 aa). One can recognise a C-type lectin domain in the interval 35–179; that stretch reads VKHPCYKMAY…CNMKHNYICK (145 aa). 2 disulfides stabilise this stretch: cysteine 61–cysteine 178 and cysteine 144–cysteine 170. Asparagine 86 is a glycosylation site (N-linked (GlcNAc...) asparagine). The chain crosses the membrane as a helical span at residues 217 to 237; sequence LIYVIIPTIPLLLLILVALGT. Topologically, residues 238-273 are cytoplasmic; that stretch reads CCFQMLHKSKGRSKTSPNQSTLWISKSTRKESGMEV. Residues 247–273 are disordered; it reads KGRSKTSPNQSTLWISKSTRKESGMEV. The span at 251–263 shows a compositional bias: polar residues; it reads KTSPNQSTLWISK.

As to quaternary structure, interacts with RABGGTB. As to expression, in adult mice preferentially expressed in skeletal muscle, testis, brain, and lung. Expressed in striated muscle (at protein level). Expressed in spinal cord. Detected in spinal cord fast motor neurons (at protein level).

It localises to the membrane. May play a role in the development of the nervous system such as in neurite outgrowth and elongation. May be involved in motor axon growth and guidance. The polypeptide is Chondrolectin (Chodl) (Mus musculus (Mouse)).